Here is a 192-residue protein sequence, read N- to C-terminus: Protein GrpE (192 aa).

Residues 1–34 (MSSKEQKTPNEQVSEEMENAAEQQVEATQETGEG) form a disordered region. Residues 21–31 (AEQQVEATQET) are compositionally biased toward polar residues.

The protein belongs to the GrpE family. Homodimer.

The protein localises to the cytoplasm. Participates actively in the response to hyperosmotic and heat shock by preventing the aggregation of stress-denatured proteins, in association with DnaK and GrpE. It is the nucleotide exchange factor for DnaK and may function as a thermosensor. Unfolded proteins bind initially to DnaJ; upon interaction with the DnaJ-bound protein, DnaK hydrolyzes its bound ATP, resulting in the formation of a stable complex. GrpE releases ADP from DnaK; ATP binding to DnaK triggers the release of the substrate protein, thus completing the reaction cycle. Several rounds of ATP-dependent interactions between DnaJ, DnaK and GrpE are required for fully efficient folding. The protein is Protein GrpE of Yersinia enterocolitica serotype O:8 / biotype 1B (strain NCTC 13174 / 8081).